Here is a 692-residue protein sequence, read N- to C-terminus: Glycine--tRNA ligase beta subunit (692 aa).

The protein belongs to the class-II aminoacyl-tRNA synthetase family. In terms of assembly, tetramer of two alpha and two beta subunits.

The protein localises to the cytoplasm. It catalyses the reaction tRNA(Gly) + glycine + ATP = glycyl-tRNA(Gly) + AMP + diphosphate. This Alteromonas mediterranea (strain DSM 17117 / CIP 110805 / LMG 28347 / Deep ecotype) protein is Glycine--tRNA ligase beta subunit.